The primary structure comprises 786 residues: Exo-beta-D-glucosaminidase (786 aa).

Residues Y53, 102-103 (GE), 178-179 (DE), E306, E347, and Y379 contribute to the substrate site. The Proton donor role is filled by E179. The active-site Nucleophile is the E347.

It belongs to the glycosyl hydrolase 35 family. Homodimer.

The protein resides in the cytoplasm. It catalyses the reaction beta-D-glucosaminyl-(1-&gt;4)-N-acetyl-D-glucosamine + H2O = D-glucosamine + N-acetyl-D-glucosamine. It functions in the pathway glycan degradation; chitin degradation. Exo-type enzyme that specifically cleaves the non-reducing terminal glycosidic bond of chitooligosaccharides. Catalyzes the hydrolysis of GlcN-GlcNAc to glucosamine (GlcN) and N-acetylglucosamine (GlcNAc). Involved in chitin degradation. Can also hydrolyze reduced chitobiose (GlcN2OH) and chitooligosaccharides of various chain lengths. The chain is Exo-beta-D-glucosaminidase from Thermococcus kodakarensis (strain ATCC BAA-918 / JCM 12380 / KOD1) (Pyrococcus kodakaraensis (strain KOD1)).